Consider the following 129-residue polypeptide: UPF0325 protein HCH_00487 (129 aa).

This sequence belongs to the UPF0325 family.

This is UPF0325 protein HCH_00487 from Hahella chejuensis (strain KCTC 2396).